A 314-amino-acid polypeptide reads, in one-letter code: Olfactory receptor 5P72 (314 aa).

Topologically, residues 1 to 28 are extracellular; sequence MAFLEVGNHTAVTEFILLGLTDDPVLRV. Residue N8 is glycosylated (N-linked (GlcNAc...) asparagine). Residues 29–49 form a helical membrane-spanning segment; sequence VLFTIILCIYLVTVMGNLSTI. The Cytoplasmic segment spans residues 50 to 57; it reads LLIRVSSQ. The chain crosses the membrane as a helical span at residues 58 to 78; sequence LHHPMYFFLSHLASVDMGLSS. At 79–102 the chain is on the extracellular side; the sequence is SVTPNMLLNFLIERNTISYLGCGI. An intrachain disulfide couples C100 to C192. Residues 103-123 form a helical membrane-spanning segment; sequence QQSLADFFGSVECFLLAAMAY. The Cytoplasmic segment spans residues 124-136; that stretch reads DRFMAICNPLLYS. Residues 137–157 form a helical membrane-spanning segment; sequence TKMSTKVCVQLVVGSYIGGFL. The Extracellular segment spans residues 158-199; it reads NASLIMFYFFSFLFCGPNRVDHFFCDFAPLVELSCSDVSVSV. Residues 200–220 form a helical membrane-spanning segment; sequence IVISFSAGSVTMITVFVIAVS. Residues 221–240 lie on the Cytoplasmic side of the membrane; the sequence is YSYILITILKMHSIEGRHKA. The helical transmembrane segment at 241-261 threads the bilayer; that stretch reads FSTCTSHLTAVTLYYGTITFI. Topologically, residues 262-274 are extracellular; the sequence is YVMPKSSFSTDQN. The chain crosses the membrane as a helical span at residues 275–295; that stretch reads KVVSVFYMVMIPMLNPLIYSL. The Cytoplasmic segment spans residues 296–314; it reads RNNEIKGAIKRQLGKKMSC.

It belongs to the G-protein coupled receptor 1 family.

The protein resides in the cell membrane. In terms of biological role, potential odorant receptor. The polypeptide is Olfactory receptor 5P72 (Mus musculus (Mouse)).